The primary structure comprises 111 residues: Phosphoribosyl-ATP pyrophosphatase (111 aa).

The protein belongs to the PRA-PH family.

It is found in the cytoplasm. The catalysed reaction is 1-(5-phospho-beta-D-ribosyl)-ATP + H2O = 1-(5-phospho-beta-D-ribosyl)-5'-AMP + diphosphate + H(+). It functions in the pathway amino-acid biosynthesis; L-histidine biosynthesis; L-histidine from 5-phospho-alpha-D-ribose 1-diphosphate: step 2/9. This is Phosphoribosyl-ATP pyrophosphatase from Pseudomonas putida (strain W619).